The following is a 352-amino-acid chain: UDP-3-O-acylglucosamine N-acyltransferase (352 aa).

Residue His242 is the Proton acceptor of the active site.

The protein belongs to the transferase hexapeptide repeat family. LpxD subfamily. As to quaternary structure, homotrimer.

It carries out the reaction a UDP-3-O-[(3R)-3-hydroxyacyl]-alpha-D-glucosamine + a (3R)-hydroxyacyl-[ACP] = a UDP-2-N,3-O-bis[(3R)-3-hydroxyacyl]-alpha-D-glucosamine + holo-[ACP] + H(+). It functions in the pathway bacterial outer membrane biogenesis; LPS lipid A biosynthesis. Its function is as follows. Catalyzes the N-acylation of UDP-3-O-acylglucosamine using 3-hydroxyacyl-ACP as the acyl donor. Is involved in the biosynthesis of lipid A, a phosphorylated glycolipid that anchors the lipopolysaccharide to the outer membrane of the cell. This Alkalilimnicola ehrlichii (strain ATCC BAA-1101 / DSM 17681 / MLHE-1) protein is UDP-3-O-acylglucosamine N-acyltransferase.